We begin with the raw amino-acid sequence, 255 residues long: H-2 class II histocompatibility antigen, E-D alpha chain (255 aa).

The signal sequence occupies residues 1-25 (MATIGALVLRFFFIAVLMSSQKSWA). Residues 26-109 (IKEEHTIIQA…ERSNNTPDAN (84 aa)) are alpha-1. Residues 26 to 216 (IKEEHTIIQA…EKTLLPETKE (191 aa)) are Extracellular-facing. Residues 110–203 (VAPEVTVLSR…GLEEPLRKTW (94 aa)) are alpha-2. In terms of domain architecture, Ig-like C1-type spans 112–204 (PEVTVLSRSP…LEEPLRKTWE (93 aa)). Cysteine 132 and cysteine 188 are disulfide-bonded. The N-linked (GlcNAc...) asparagine glycan is linked to asparagine 143. Residues 204–216 (EFEEKTLLPETKE) are connecting peptide. A helical membrane pass occupies residues 217 to 242 (NVMCALGLFVGLVGIVVGIILIMKGI). The Cytoplasmic portion of the chain corresponds to 243-255 (KKRNVVERRQGAL).

This sequence belongs to the MHC class II family.

It localises to the membrane. The polypeptide is H-2 class II histocompatibility antigen, E-D alpha chain (H2-Ea) (Mus musculus (Mouse)).